Reading from the N-terminus, the 1217-residue chain is DNA-directed RNA polymerase subunit beta' (1217 aa).

The Zn(2+) site is built by Cys60, Cys62, Cys75, and Cys78. Positions 449, 451, and 453 each coordinate Mg(2+). Zn(2+) contacts are provided by Cys821, Cys895, Cys902, and Cys905.

This sequence belongs to the RNA polymerase beta' chain family. In terms of assembly, the RNAP catalytic core consists of 2 alpha, 1 beta, 1 beta' and 1 omega subunit. When a sigma factor is associated with the core the holoenzyme is formed, which can initiate transcription. It depends on Mg(2+) as a cofactor. Requires Zn(2+) as cofactor.

It catalyses the reaction RNA(n) + a ribonucleoside 5'-triphosphate = RNA(n+1) + diphosphate. DNA-dependent RNA polymerase catalyzes the transcription of DNA into RNA using the four ribonucleoside triphosphates as substrates. This chain is DNA-directed RNA polymerase subunit beta', found in Lactobacillus helveticus (strain DPC 4571).